A 74-amino-acid polypeptide reads, in one-letter code: Kappa-scoloptoxin(07)-Ssm2e (74 aa).

Residues 1 to 19 (MLVFYALLFVSVFSNTVMG) form the signal peptide. Positions 20–41 (ATIDMPIPKPILREAIEEIDVN) are excised as a propeptide.

It belongs to the scoloptoxin-07 family. Contains 3 disulfide bonds. Expressed by the venom gland.

The protein resides in the secreted. Inhibits voltage-gated potassium channels. This is Kappa-scoloptoxin(07)-Ssm2e from Scolopendra mutilans (Chinese red-headed centipede).